The sequence spans 150 residues: Single-stranded DNA-binding protein 1 (150 aa).

An SSB domain is found at 1–104 (MINNVVLVGR…VVADTFQMLE (104 aa)). Over residues 103-120 (LESNKTQGQQTSKPQAQN) the composition is skewed to polar residues. Residues 103 to 150 (LESNKTQGQQTSKPQAQNKKPQAPDPFKAPAADPFAGGTEISDDDLPF) are disordered. Residues 121–138 (KKPQAPDPFKAPAADPFA) show a composition bias toward low complexity. The short motif at 145–150 (DDDLPF) is the Important for interaction with partner proteins element.

As to quaternary structure, homotetramer.

Functionally, plays an important role in DNA replication, recombination and repair. Binds to ssDNA and to an array of partner proteins to recruit them to their sites of action during DNA metabolism. The chain is Single-stranded DNA-binding protein 1 (ssb1) from Lactococcus lactis subsp. lactis (strain IL1403) (Streptococcus lactis).